Consider the following 52-residue polypeptide: Gastrin/cholecystokinin-like peptide (52 aa).

This sequence belongs to the gastrin/cholecystokinin family.

Its subcellular location is the secreted. In terms of biological role, may control digestion processes. This is Gastrin/cholecystokinin-like peptide from Trachemys scripta (Red-eared slider turtle).